Consider the following 547-residue polypeptide: Chaperonin GroEL 1 (547 aa).

ATP-binding positions include T30–P33, K51, D87–T91, G415, N479–A481, and D495. A disordered region spans residues P525 to Y547. Residues P531 to G541 are compositionally biased toward gly residues.

The protein belongs to the chaperonin (HSP60) family. In terms of assembly, forms a cylinder of 14 subunits composed of two heptameric rings stacked back-to-back. Interacts with the co-chaperonin GroES.

The protein resides in the cytoplasm. The enzyme catalyses ATP + H2O + a folded polypeptide = ADP + phosphate + an unfolded polypeptide.. Functionally, together with its co-chaperonin GroES, plays an essential role in assisting protein folding. The GroEL-GroES system forms a nano-cage that allows encapsulation of the non-native substrate proteins and provides a physical environment optimized to promote and accelerate protein folding. This Anaeromyxobacter sp. (strain Fw109-5) protein is Chaperonin GroEL 1.